The following is a 139-amino-acid chain: Non-structural protein 1 (139 aa).

The short motif at 136-139 is the DLNP; interaction with MAP1B element; it reads DLNP.

The protein belongs to the pneumovirus non-structural protein 1 family. In terms of assembly, monomer. Homomultimer. Heteromultimer with NS2. Interacts with the matrix protein M. Interacts with host ELOC and CUL2; this interaction allows NS1 to form an active E3 ligase with ELOC and CUL2. Interacts with host IRF3; this interaction leads to the disrupted association of IRF3 with CREBBP and thus reduced binding of IRF3 to the IFN-beta promoter. Interacts with host MAVS; this interaction prevents MAVS binding to RIGI and inhibits signaling pathway leading to interferon production. Interacts with host MAP1B/microtubule-associated protein 1B. Interacts with host TRIM25 (via SPRY domain); this interaction suppresses RIGI ubiquitination and results in decreased interaction between RIGI and MAVS.

It localises to the host cytoplasm. Its subcellular location is the host mitochondrion. The protein resides in the host nucleus. In terms of biological role, plays a major role in antagonizing the type I IFN-mediated antiviral response by degrading or inhibiting multiple cellular factors required for either IFN induction or response pathways. Acts cooperatively with NS2 to repress activation and nuclear translocation of host IFN-regulatory factor IRF3. Also disrupts the association of IRF3 with CREBBP. Interacts with host mitochondrial-associated membrane (MAM) MAVS and prevents the interaction with RIGI. Interacts with TRIM25 to suppress TRIM25-mediated RIGI ubiquitination and thereby RIGI-MAVS interaction. Together with NS2, participates in the proteasomal degradation of host STAT2, IRF3, IRF7, TBK1 and RIGI through a NS-degradasome involving CUL2 and Elongin-C. The degradasome requires an intact mitochondrial MAVS. Decreases the levels of host TRAF3 and IKBKE/IKK-epsilon. As functions other than disruptions of the type I IFN-mediated antiviral signaling pathways, induces host SOCS1 and SOCS3 expression. Suppresses premature apoptosis by an NF-kappa-B-dependent, interferon-independent mechanism and thus facilitates virus growth. Additionally, NS1 may serve some inhibitory role in viral transcription and RNA replication. Suppresses proliferation and activation of host CD103+ CD8+ cytotoxic T-lymphocytes and Th17 helper T-lymphocytes. The protein is Non-structural protein 1 (1C) of Homo sapiens (Human).